An 881-amino-acid polypeptide reads, in one-letter code: Valine--tRNA ligase (881 aa).

Residues 49-59 (PNVTGKLHLGH) carry the 'HIGH' region motif. The 'KMSKS' region motif lies at 526-530 (KMSKS). K529 is a binding site for ATP. Residues 810–881 (LADLINLDEE…VRQRLADLEK (72 aa)) adopt a coiled-coil conformation.

This sequence belongs to the class-I aminoacyl-tRNA synthetase family. ValS type 1 subfamily. Monomer.

It is found in the cytoplasm. The catalysed reaction is tRNA(Val) + L-valine + ATP = L-valyl-tRNA(Val) + AMP + diphosphate. Catalyzes the attachment of valine to tRNA(Val). As ValRS can inadvertently accommodate and process structurally similar amino acids such as threonine, to avoid such errors, it has a 'posttransfer' editing activity that hydrolyzes mischarged Thr-tRNA(Val) in a tRNA-dependent manner. The protein is Valine--tRNA ligase of Bacillus cereus (strain ATCC 10987 / NRS 248).